The following is a 68-amino-acid chain: MNIINKIFGIQYIKVTYKVTDKNPYTDEHEEPQVESIILEKDPNWPVEFRLPCYGHWADVEIISIENV.

This is an uncharacterized protein from Enterobacteria phage T4 (Bacteriophage T4).